Consider the following 229-residue polypeptide: Triosephosphate isomerase (229 aa).

A substrate-binding site is contributed by Asn-6 to Lys-8. Residue His-88 is the Electrophile of the active site. Glu-157 serves as the catalytic Proton acceptor. 2 residues coordinate substrate: Gly-163 and Ser-193.

It belongs to the triosephosphate isomerase family. In terms of assembly, homodimer.

It is found in the cytoplasm. The enzyme catalyses D-glyceraldehyde 3-phosphate = dihydroxyacetone phosphate. Its pathway is carbohydrate biosynthesis; gluconeogenesis. It functions in the pathway carbohydrate degradation; glycolysis; D-glyceraldehyde 3-phosphate from glycerone phosphate: step 1/1. Involved in the gluconeogenesis. Catalyzes stereospecifically the conversion of dihydroxyacetone phosphate (DHAP) to D-glyceraldehyde-3-phosphate (G3P). The polypeptide is Triosephosphate isomerase (Sulfurovum sp. (strain NBC37-1)).